The following is a 561-amino-acid chain: Acyl-CoA ligase ppsA (561 aa).

Asn-21 carries N-linked (GlcNAc...) asparagine glycosylation. Residues 71–91 traverse the membrane as a helical segment; sequence SILYPALFLAIVGVGAVYMGA. 203–214 contributes to the AMP binding site; it reads MFATSGTSGLPK. Asn-396 carries an N-linked (GlcNAc...) asparagine glycan. Residues 462-540 form an AMP-binding region; it reads ELEAELAQHP…DSIPRNSGGK (79 aa).

The protein belongs to the ATP-dependent AMP-binding enzyme family.

It is found in the membrane. It carries out the reaction acetate + ATP + CoA = acetyl-CoA + ADP + phosphate. The enzyme catalyses propanoate + ATP + CoA = propanoyl-CoA + AMP + diphosphate. It functions in the pathway secondary metabolite biosynthesis. Acyl-CoA ligase; part of the gene cluster that mediates the biosynthesis of 2,4'-dihydroxy-3'-methoxypropiophenone. The first step of the pathway is the conversion of acetate into acetyl-CoA by the acyl-CoA ligase ppsA. Acetyl-CoA is then used as a starter unit by the polyketide synthase ppsB and condensed with 4 malonyl-CoA unit to produce the pentaketide backbone. During polyketide extension, the polykedite chain is probably reduced and dehydrated by the KR and PT domains, respectively. O-methylation seems to be catalyzed by an unknown methyltransferase rather than by the CMeT domain of ppsB. Two hydroxylations and one further decarboxylation step catalyzed by yet unknown enzymes are then required to yield 4'-hydroxy-3'-methoxypropiophenone. PpsC functions as a carrier protein to transport 4'-hydroxy-3'-methoxypropiophenone to a specific cell compartment in which 4'-hydroxy-3'-methoxypropiophenone is hydroxylated to 2,4'-dihydroxy-3'-methoxypropiophenone by a still to be identified enzyme. In Aspergillus oryzae (strain ATCC 42149 / RIB 40) (Yellow koji mold), this protein is Acyl-CoA ligase ppsA.